Consider the following 197-residue polypeptide: uncharacterized protein (197 aa).

The first 23 residues, 1-23, serve as a signal peptide directing secretion; it reads MSARAPKELRLALPPCLLNRTFA. N-linked (GlcNAc...) asparagine glycosylation is found at Asn19 and Asn26. Topologically, residues 24–61 are extracellular; it reads SPNASGSGNTGARGPGAGGSGTCITQVGQQLFQSFSST. A helical transmembrane segment spans residues 62 to 82; it reads LVLIVLVTLIFCLIVLSLSTF. Topologically, residues 83–197 are cytoplasmic; it reads HIHKRRMKKR…EGLLQTVVLS (115 aa). Residues 94–179 are disordered; that stretch reads MQRAQEEYER…ASSPQGAHAV (86 aa). 2 stretches are compositionally biased toward basic and acidic residues: residues 96 to 107 and 125 to 136; these read RAQEEYERDHCS and HAKETRLERQPR. Positions 147 to 161 are enriched in low complexity; it reads SSSSSSSPGLPCQGP. The span at 162–171 shows a compositional bias: pro residues; it reads CAPPPPPPAS.

It is found in the membrane. This is an uncharacterized protein from Pongo abelii (Sumatran orangutan).